A 128-amino-acid polypeptide reads, in one-letter code: Modulator protein MzrA (128 aa).

Topologically, residues Met-1–Gln-11 are cytoplasmic. The chain crosses the membrane as a helical span at residues Phe-12–Val-32. Residues Gln-33–Gly-128 lie on the Periplasmic side of the membrane.

Belongs to the MzrA family. As to quaternary structure, interacts with EnvZ.

It localises to the cell inner membrane. Functionally, modulates the activity of the EnvZ/OmpR two-component regulatory system, probably by directly modulating EnvZ enzymatic activity and increasing stability of phosphorylated OmpR. This chain is Modulator protein MzrA, found in Klebsiella pneumoniae subsp. pneumoniae (strain ATCC 700721 / MGH 78578).